The primary structure comprises 246 residues: Orotidine 5'-phosphate decarboxylase (246 aa).

Substrate is bound by residues D22, K44, 71-80 (DLKFHDIPNT), T131, R192, Q201, G221, and R222. The Proton donor role is filled by K73.

This sequence belongs to the OMP decarboxylase family. Type 1 subfamily. Homodimer.

The enzyme catalyses orotidine 5'-phosphate + H(+) = UMP + CO2. The protein operates within pyrimidine metabolism; UMP biosynthesis via de novo pathway; UMP from orotate: step 2/2. Catalyzes the decarboxylation of orotidine 5'-monophosphate (OMP) to uridine 5'-monophosphate (UMP). This Enterobacter sp. (strain 638) protein is Orotidine 5'-phosphate decarboxylase.